The chain runs to 944 residues: 2-oxoglutarate dehydrogenase E1 component (944 aa).

The segment at Arg914–Asn944 is disordered. The segment covering Pro925–Val936 has biased composition (basic and acidic residues).

It belongs to the alpha-ketoglutarate dehydrogenase family. In terms of assembly, homodimer. Part of the 2-oxoglutarate dehydrogenase (OGDH) complex composed of E1 (2-oxoglutarate dehydrogenase), E2 (dihydrolipoamide succinyltransferase) and E3 (dihydrolipoamide dehydrogenase); the complex contains multiple copies of the three enzymatic components (E1, E2 and E3). Thiamine diphosphate serves as cofactor.

It carries out the reaction N(6)-[(R)-lipoyl]-L-lysyl-[protein] + 2-oxoglutarate + H(+) = N(6)-[(R)-S(8)-succinyldihydrolipoyl]-L-lysyl-[protein] + CO2. Its function is as follows. E1 component of the 2-oxoglutarate dehydrogenase (OGDH) complex which catalyzes the decarboxylation of 2-oxoglutarate, the first step in the conversion of 2-oxoglutarate to succinyl-CoA and CO(2). This Bacillus licheniformis (strain ATCC 14580 / DSM 13 / JCM 2505 / CCUG 7422 / NBRC 12200 / NCIMB 9375 / NCTC 10341 / NRRL NRS-1264 / Gibson 46) protein is 2-oxoglutarate dehydrogenase E1 component.